The chain runs to 284 residues: NADH-cytochrome b5 reductase 1 (284 aa).

A helical membrane pass occupies residues Pro-8–Phe-28. The FAD-binding FR-type domain maps to Asn-41 to Thr-144. Residues Glu-124–Gly-139 and Ser-150–Leu-182 contribute to the FAD site.

The protein belongs to the flavoprotein pyridine nucleotide cytochrome reductase family. Monomer. Component of the 2-(3-amino-3-carboxypropyl)histidine synthase complex composed of DPH1, DPH2, DPH3 and a NADH-dependent reductase, predominantly CBR1. Requires FAD as cofactor.

Its subcellular location is the mitochondrion outer membrane. It catalyses the reaction 2 Fe(III)-[cytochrome b5] + NADH = 2 Fe(II)-[cytochrome b5] + NAD(+) + H(+). The catalysed reaction is 2 Fe(3+)-[Dph3] + NADH = 2 Fe(2+)-[Dph3] + NAD(+) + H(+). The protein operates within protein modification; peptidyl-diphthamide biosynthesis. Its function is as follows. NADH-dependent reductase for DPH3 and cytochrome b5. Required for the first step of diphthamide biosynthesis, a post-translational modification of histidine which occurs in elongation factor 2. DPH1 and DPH2 transfer a 3-amino-3-carboxypropyl (ACP) group from S-adenosyl-L-methionine (SAM) to a histidine residue, the reaction is assisted by a reduction system comprising DPH3 and a NADH-dependent reductase, predominantly CBR1. By reducing DPH3, also involved in the formation of the tRNA wobble base modification mcm5s 2U (5-methoxycarbonylmethyl-2-thiouridine), mediated by the elongator complex. The cytochrome b5/NADH cytochrome b5 reductase electron transfer system supports the catalytic activity of several sterol biosynthetic enzymes. In Debaryomyces hansenii (strain ATCC 36239 / CBS 767 / BCRC 21394 / JCM 1990 / NBRC 0083 / IGC 2968) (Yeast), this protein is NADH-cytochrome b5 reductase 1 (CBR1).